The chain runs to 151 residues: D-aminoacyl-tRNA deacylase (151 aa).

A Gly-cisPro motif, important for rejection of L-amino acids motif is present at residues 138–139 (GP).

This sequence belongs to the DTD family. In terms of assembly, homodimer.

The protein localises to the cytoplasm. The catalysed reaction is glycyl-tRNA(Ala) + H2O = tRNA(Ala) + glycine + H(+). It carries out the reaction a D-aminoacyl-tRNA + H2O = a tRNA + a D-alpha-amino acid + H(+). Its function is as follows. An aminoacyl-tRNA editing enzyme that deacylates mischarged D-aminoacyl-tRNAs. Also deacylates mischarged glycyl-tRNA(Ala), protecting cells against glycine mischarging by AlaRS. Acts via tRNA-based rather than protein-based catalysis; rejects L-amino acids rather than detecting D-amino acids in the active site. By recycling D-aminoacyl-tRNA to D-amino acids and free tRNA molecules, this enzyme counteracts the toxicity associated with the formation of D-aminoacyl-tRNA entities in vivo and helps enforce protein L-homochirality. The chain is D-aminoacyl-tRNA deacylase from Magnetococcus marinus (strain ATCC BAA-1437 / JCM 17883 / MC-1).